The primary structure comprises 176 residues: Inner membrane-spanning protein YciB (176 aa).

The next 5 membrane-spanning stretches (helical) occupy residues 22–42, 50–70, 81–101, 121–141, and 149–169; these read IYYASGALIVASALVLVYTWL, VALITFVLVAIFGSLTLYYHN, IYSLFAAALLISQFVFGKPLI, IAWALFFLACGAANIYIAFWL, and FKVFGLTGLTLVFTLLSGIYI.

The protein belongs to the YciB family.

The protein resides in the cell inner membrane. In terms of biological role, plays a role in cell envelope biogenesis, maintenance of cell envelope integrity and membrane homeostasis. This Sodalis glossinidius (strain morsitans) protein is Inner membrane-spanning protein YciB.